The chain runs to 436 residues: Chromosomal replication initiator protein DnaA (436 aa).

The domain I, interacts with DnaA modulators stretch occupies residues 1 to 69; sequence MLADEILELL…AYLYEVKTGK (69 aa). A domain II region spans residues 69–99; the sequence is KKPEVEITSQTKLKNIKQNQVNVKQIKAQSS. Positions 100–314 are domain III, AAA+ region; the sequence is ILNPGYTFEN…GAIINLNAYA (215 aa). Residues Gly-144, Gly-146, Lys-147, and Thr-148 each contribute to the ATP site. Residues 315 to 436 form a domain IV, binds dsDNA region; that stretch reads SLMRVEITLE…EIKNKILTKG (122 aa).

Belongs to the DnaA family. Oligomerizes as a right-handed, spiral filament on DNA at oriC.

The protein resides in the cytoplasm. Its function is as follows. Plays an essential role in the initiation and regulation of chromosomal replication. ATP-DnaA binds to the origin of replication (oriC) to initiate formation of the DNA replication initiation complex once per cell cycle. Binds the DnaA box (a 9 base pair repeat at the origin) and separates the double-stranded (ds)DNA. Forms a right-handed helical filament on oriC DNA; dsDNA binds to the exterior of the filament while single-stranded (ss)DNA is stabiized in the filament's interior. The ATP-DnaA-oriC complex binds and stabilizes one strand of the AT-rich DNA unwinding element (DUE), permitting loading of DNA polymerase. After initiation quickly degrades to an ADP-DnaA complex that is not apt for DNA replication. Binds acidic phospholipids. The chain is Chromosomal replication initiator protein DnaA from Campylobacter concisus (strain 13826).